The chain runs to 169 residues: Peptide deformylase (169 aa).

Fe cation contacts are provided by Cys-91 and His-133. Glu-134 is a catalytic residue. A Fe cation-binding site is contributed by His-137.

The protein belongs to the polypeptide deformylase family. It depends on Fe(2+) as a cofactor.

The enzyme catalyses N-terminal N-formyl-L-methionyl-[peptide] + H2O = N-terminal L-methionyl-[peptide] + formate. Removes the formyl group from the N-terminal Met of newly synthesized proteins. Requires at least a dipeptide for an efficient rate of reaction. N-terminal L-methionine is a prerequisite for activity but the enzyme has broad specificity at other positions. This Salmonella typhi protein is Peptide deformylase.